The sequence spans 135 residues: Protein NrdI (135 aa).

It belongs to the NrdI family.

Its function is as follows. Probably involved in ribonucleotide reductase function. The polypeptide is Protein NrdI (Pectobacterium carotovorum subsp. carotovorum (strain PC1)).